A 256-amino-acid chain; its full sequence is V-type proton ATPase subunit D (256 aa).

Residues Gln-211–Gln-230 are compositionally biased toward basic and acidic residues. The segment at Gln-211–Phe-256 is disordered.

This sequence belongs to the V-ATPase D subunit family. As to quaternary structure, V-ATPase is a heteromultimeric enzyme composed of a peripheral catalytic V1 complex (components A to H) attached to an integral membrane V0 proton pore complex (components: a, c, c', c'', d, e, f and VOA1). Interacts with RAV1 and RAV2 components of the RAVE complex, which are essential for the stability and assembly of V-ATPase.

It is found in the vacuole membrane. Functionally, subunit of the V1 complex of vacuolar(H+)-ATPase (V-ATPase), a multisubunit enzyme composed of a peripheral complex (V1) that hydrolyzes ATP and a membrane integral complex (V0) that translocates protons. V-ATPase is responsible for acidifying and maintaining the pH of intracellular compartments. The chain is V-type proton ATPase subunit D from Saccharomyces cerevisiae (strain ATCC 204508 / S288c) (Baker's yeast).